A 119-amino-acid chain; its full sequence is Large ribosomal subunit protein bL20 (119 aa).

The protein belongs to the bacterial ribosomal protein bL20 family.

Binds directly to 23S ribosomal RNA and is necessary for the in vitro assembly process of the 50S ribosomal subunit. It is not involved in the protein synthesizing functions of that subunit. The chain is Large ribosomal subunit protein bL20 from Cellvibrio japonicus (strain Ueda107) (Pseudomonas fluorescens subsp. cellulosa).